Reading from the N-terminus, the 119-residue chain is Ribonuclease P protein component (119 aa).

The protein belongs to the RnpA family. As to quaternary structure, consists of a catalytic RNA component (M1 or rnpB) and a protein subunit.

The enzyme catalyses Endonucleolytic cleavage of RNA, removing 5'-extranucleotides from tRNA precursor.. Functionally, RNaseP catalyzes the removal of the 5'-leader sequence from pre-tRNA to produce the mature 5'-terminus. It can also cleave other RNA substrates such as 4.5S RNA. The protein component plays an auxiliary but essential role in vivo by binding to the 5'-leader sequence and broadening the substrate specificity of the ribozyme. The polypeptide is Ribonuclease P protein component (Listeria innocua serovar 6a (strain ATCC BAA-680 / CLIP 11262)).